A 564-amino-acid polypeptide reads, in one-letter code: Keratin, type II cytoskeletal 6A (564 aa).

Over residues 1-11 (MASTSTTIRSH) the composition is skewed to low complexity. The interval 1–23 (MASTSTTIRSHSSSRRGFSANSA) is disordered. Position 2 is an N-acetylalanine (Ala2). The head stretch occupies residues 2 to 162 (ASTSTTIRSH…DPTIQRVRAE (161 aa)). The coil 1A stretch occupies residues 163–198 (EREQIKTLNNKFASFIDKVRFLEQQNKVLETKWTLL). Residues 163 to 476 (EREQIKTLNN…KLLEGEECRL (314 aa)) enclose the IF rod domain. The linker 1 stretch occupies residues 199–217 (QEQGTKTVRQNLEPLFEQY). Positions 218 to 309 (INNLRRQLDS…ALYDAELSQM (92 aa)) are coil 1B. The interval 310 to 333 (QTHISDTSVVLSMDNNRNLDLDSI) is linker 12. The interval 334–472 (IAEVKAQYEE…ATYRKLLEGE (139 aa)) is coil 2. The tract at residues 473-564 (ECRLNGEGVG…SSSSRKSYKH (92 aa)) is tail.

The protein belongs to the intermediate filament family. Heterodimer of a type I and a type II keratin. KRT6 isomers associate with KRT16 and/or KRT17. Interacts with TCHP. Expressed in the corneal epithelium (at protein level).

Epidermis-specific type I keratin involved in wound healing. Involved in the activation of follicular keratinocytes after wounding, while it does not play a major role in keratinocyte proliferation or migration. Participates in the regulation of epithelial migration by inhibiting the activity of SRC during wound repair. The chain is Keratin, type II cytoskeletal 6A (KRT6A) from Homo sapiens (Human).